Reading from the N-terminus, the 149-residue chain is Putative glycine cleavage system H protein 3 (149 aa).

Residues Thr-39–Glu-121 enclose the Lipoyl-binding domain. N6-lipoyllysine is present on Lys-80.

Belongs to the GcvH family. As to quaternary structure, the glycine cleavage system is composed of four proteins: P, T, L and H. (R)-lipoate serves as cofactor.

Functionally, the glycine cleavage system catalyzes the degradation of glycine. The H protein shuttles the methylamine group of glycine from the P protein to the T protein. The sequence is that of Putative glycine cleavage system H protein 3 (gcvH3) from Dictyostelium discoideum (Social amoeba).